The following is a 707-amino-acid chain: Protein kinase C theta type (707 aa).

One can recognise a C2 domain in the interval 1-107 (MSPFLRIGLS…KNNGRTEIWL (107 aa)). At Tyr90 the chain carries Phosphotyrosine; by LCK. Residues 159 to 209 (CHEFTATFFPQPTFCSVCHEFVWGLNKQGYQCRQCNAAIHKKCIDKVIAKC) form a Phorbol-ester/DAG-type 1 zinc finger. Thr219 is subject to Phosphothreonine; by autocatalysis. Residues 231–281 (PHRFKVYNYKSPTFCEHCGTLLWGLARQGLKCDACGMNVHHRCQTKVANLC) form a Phorbol-ester/DAG-type 2 zinc finger. The tract at residues 327 to 365 (ETRPPCVPTPGKREPQGISWDSPLDGSNKSAGPPEPEVS) is disordered. Ser348 is subject to Phosphoserine. The Protein kinase domain maps to 380 to 634 (FILHKMLGKG…RGDIRQHPLF (255 aa)). Residues 386 to 394 (LGKGSFGKV) and Lys409 contribute to the ATP site. Asp504 functions as the Proton acceptor in the catalytic mechanism. The residue at position 538 (Thr538) is a Phosphothreonine; by PDPK1. An AGC-kinase C-terminal domain is found at 635–706 (REINWEELER…INPGMETLIC (72 aa)). Ser676 is subject to Phosphoserine; by autocatalysis. Position 685 is a phosphoserine (Ser685). Ser695 carries the phosphoserine; by autocatalysis modification.

This sequence belongs to the protein kinase superfamily. AGC Ser/Thr protein kinase family. PKC subfamily. Part of a membrane raft complex composed at least of BCL10, CARD11, MALT1 and IKBKB. Interacts with GLRX3 (via N-terminus). Interacts with ECT2. Interacts with CCDC88A/GIV; the interaction leads to phosphorylation of CCDC88A and inhibition of its guanine nucleotide exchange factor activity. Interacts with CD28. Mg(2+) serves as cofactor. In terms of processing, autophosphorylation at Thr-219 is required for targeting to the TCR and cellular function of PRKCQ upon antigen receptor ligation. Following TCR stimulation, phosphorylated at Tyr-90 and Ser-685. As to expression, T-lymphocytes and skeletal muscle.

The protein localises to the cytoplasm. The protein resides in the cell membrane. The catalysed reaction is L-seryl-[protein] + ATP = O-phospho-L-seryl-[protein] + ADP + H(+). It catalyses the reaction L-threonyl-[protein] + ATP = O-phospho-L-threonyl-[protein] + ADP + H(+). Novel PKCs (PRKCD, PRKCE, PRKCH and PRKCQ) are calcium-insensitive, but activated by diacylglycerol (DAG) and phosphatidylserine. Three specific sites; Thr-538 (activation loop of the kinase domain), Ser-676 (turn motif) and Ser-695 (hydrophobic region), need to be phosphorylated for its full activation. Calcium-independent, phospholipid- and diacylglycerol (DAG)-dependent serine/threonine-protein kinase that mediates non-redundant functions in T-cell receptor (TCR) signaling, including T-cells activation, proliferation, differentiation and survival, by mediating activation of multiple transcription factors such as NF-kappa-B, JUN, NFATC1 and NFATC2. In TCR-CD3/CD28-co-stimulated T-cells, is required for the activation of NF-kappa-B and JUN, which in turn are essential for IL2 production, and participates in the calcium-dependent NFATC1 and NFATC2 transactivation. Mediates the activation of the canonical NF-kappa-B pathway (NFKB1) by direct phosphorylation of CARD11 on several serine residues, inducing CARD11 association with lipid rafts and recruitment of the BCL10-MALT1 complex, which then activates IKK complex, resulting in nuclear translocation and activation of NFKB1. May also play an indirect role in activation of the non-canonical NF-kappa-B (NFKB2) pathway. In the signaling pathway leading to JUN activation, acts by phosphorylating the mediator STK39/SPAK and may not act through MAP kinases signaling. Plays a critical role in TCR/CD28-induced NFATC1 and NFATC2 transactivation by participating in the regulation of reduced inositol 1,4,5-trisphosphate generation and intracellular calcium mobilization. After costimulation of T-cells through CD28 can phosphorylate CBLB and is required for the ubiquitination and subsequent degradation of CBLB, which is a prerequisite for the activation of TCR. During T-cells differentiation, plays an important role in the development of T-helper 2 (Th2) cells following immune and inflammatory responses, and, in the development of inflammatory autoimmune diseases, is necessary for the activation of IL17-producing Th17 cells. May play a minor role in Th1 response. Upon TCR stimulation, mediates T-cell protective survival signal by phosphorylating BAD, thus protecting T-cells from BAD-induced apoptosis, and by up-regulating BCL-X(L)/BCL2L1 levels through NF-kappa-B and JUN pathways. In platelets, regulates signal transduction downstream of the ITGA2B, CD36/GP4, F2R/PAR1 and F2RL3/PAR4 receptors, playing a positive role in 'outside-in' signaling and granule secretion signal transduction. May relay signals from the activated ITGA2B receptor by regulating the uncoupling of WASP and WIPF1, thereby permitting the regulation of actin filament nucleation and branching activity of the Arp2/3 complex. May mediate inhibitory effects of free fatty acids on insulin signaling by phosphorylating IRS1, which in turn blocks IRS1 tyrosine phosphorylation and downstream activation of the PI3K/AKT pathway. Phosphorylates MSN (moesin) in the presence of phosphatidylglycerol or phosphatidylinositol. Phosphorylates PDPK1 at 'Ser-504' and 'Ser-532' and negatively regulates its ability to phosphorylate PKB/AKT1. Phosphorylates CCDC88A/GIV and inhibits its guanine nucleotide exchange factor activity. Phosphorylates and activates LRRK1, which phosphorylates RAB proteins involved in intracellular trafficking. This chain is Protein kinase C theta type (Prkcq), found in Mus musculus (Mouse).